Here is a 447-residue protein sequence, read N- to C-terminus: Signal recognition particle 54 kDa protein (447 aa).

GTP contacts are provided by residues 105 to 112 (GVQGSGKT), 187 to 191 (DTAGR), and 247 to 250 (TKMD).

The protein belongs to the GTP-binding SRP family. SRP54 subfamily. Part of the signal recognition particle protein translocation system, which is composed of SRP and FtsY. Archaeal SRP consists of a 7S RNA molecule of 300 nucleotides and two protein subunits: SRP54 and SRP19.

Its subcellular location is the cytoplasm. It catalyses the reaction GTP + H2O = GDP + phosphate + H(+). Its function is as follows. Involved in targeting and insertion of nascent membrane proteins into the cytoplasmic membrane. Binds to the hydrophobic signal sequence of the ribosome-nascent chain (RNC) as it emerges from the ribosomes. The SRP-RNC complex is then targeted to the cytoplasmic membrane where it interacts with the SRP receptor FtsY. This is Signal recognition particle 54 kDa protein from Hyperthermus butylicus (strain DSM 5456 / JCM 9403 / PLM1-5).